The following is a 536-amino-acid chain: Chromosomal replication initiator protein DnaA (536 aa).

The segment at 1–72 (MNDFWQHCSA…DLARDFWNAP (72 aa)) is domain I, interacts with DnaA modulators. The interval 72–199 (PIEVQFVLDP…EAADSMYERS (128 aa)) is domain II. Residues 97 to 121 (RAPLPAANPAPVTAGPAPSGAADAN) are disordered. Residues 105–121 (PAPVTAGPAPSGAADAN) show a composition bias toward low complexity. The domain III, AAA+ region stretch occupies residues 200-416 (KLNPVLTFDN…GALRKILAYS (217 aa)). Residues Gly-244, Gly-246, Lys-247, and Thr-248 each coordinate ATP. The interval 417 to 536 (KFHGREITIE…LHVLEQTLKG (120 aa)) is domain IV, binds dsDNA.

Belongs to the DnaA family. Oligomerizes as a right-handed, spiral filament on DNA at oriC.

It is found in the cytoplasm. Functionally, plays an essential role in the initiation and regulation of chromosomal replication. ATP-DnaA binds to the origin of replication (oriC) to initiate formation of the DNA replication initiation complex once per cell cycle. Binds the DnaA box (a 9 base pair repeat at the origin) and separates the double-stranded (ds)DNA. Forms a right-handed helical filament on oriC DNA; dsDNA binds to the exterior of the filament while single-stranded (ss)DNA is stabiized in the filament's interior. The ATP-DnaA-oriC complex binds and stabilizes one strand of the AT-rich DNA unwinding element (DUE), permitting loading of DNA polymerase. After initiation quickly degrades to an ADP-DnaA complex that is not apt for DNA replication. Binds acidic phospholipids. The protein is Chromosomal replication initiator protein DnaA of Burkholderia thailandensis (strain ATCC 700388 / DSM 13276 / CCUG 48851 / CIP 106301 / E264).